Here is a 173-residue protein sequence, read N- to C-terminus: Crossover junction endodeoxyribonuclease RuvC (173 aa).

Catalysis depends on residues Asp-8, Glu-67, and Asp-139. Mg(2+) is bound by residues Asp-8, Glu-67, and Asp-139.

Belongs to the RuvC family. As to quaternary structure, homodimer which binds Holliday junction (HJ) DNA. The HJ becomes 2-fold symmetrical on binding to RuvC with unstacked arms; it has a different conformation from HJ DNA in complex with RuvA. In the full resolvosome a probable DNA-RuvA(4)-RuvB(12)-RuvC(2) complex forms which resolves the HJ. Mg(2+) is required as a cofactor.

The protein resides in the cytoplasm. The catalysed reaction is Endonucleolytic cleavage at a junction such as a reciprocal single-stranded crossover between two homologous DNA duplexes (Holliday junction).. Functionally, the RuvA-RuvB-RuvC complex processes Holliday junction (HJ) DNA during genetic recombination and DNA repair. Endonuclease that resolves HJ intermediates. Cleaves cruciform DNA by making single-stranded nicks across the HJ at symmetrical positions within the homologous arms, yielding a 5'-phosphate and a 3'-hydroxyl group; requires a central core of homology in the junction. The consensus cleavage sequence is 5'-(A/T)TT(C/G)-3'. Cleavage occurs on the 3'-side of the TT dinucleotide at the point of strand exchange. HJ branch migration catalyzed by RuvA-RuvB allows RuvC to scan DNA until it finds its consensus sequence, where it cleaves and resolves the cruciform DNA. This is Crossover junction endodeoxyribonuclease RuvC from Shewanella baltica (strain OS223).